The chain runs to 156 residues: Transcription antitermination protein NusB (156 aa).

This sequence belongs to the NusB family.

In terms of biological role, involved in transcription antitermination. Required for transcription of ribosomal RNA (rRNA) genes. Binds specifically to the boxA antiterminator sequence of the ribosomal RNA (rrn) operons. In Rickettsia felis (strain ATCC VR-1525 / URRWXCal2) (Rickettsia azadi), this protein is Transcription antitermination protein NusB.